Reading from the N-terminus, the 363-residue chain is Fructose-bisphosphate aldolase (363 aa).

Residues Arg56 and Lys147 each contribute to the substrate site. Glu188 serves as the catalytic Proton acceptor. Lys230 serves as the catalytic Schiff-base intermediate with dihydroxyacetone-P.

It belongs to the class I fructose-bisphosphate aldolase family.

It carries out the reaction beta-D-fructose 1,6-bisphosphate = D-glyceraldehyde 3-phosphate + dihydroxyacetone phosphate. It participates in carbohydrate degradation; glycolysis; D-glyceraldehyde 3-phosphate and glycerone phosphate from D-glucose: step 4/4. In Schistosoma mansoni (Blood fluke), this protein is Fructose-bisphosphate aldolase.